The chain runs to 305 residues: Major pollen allergen Pha a 5.2 (305 aa).

The signal sequence occupies residues 1–25 (MAVQKYTVALFLAVALVAGPAALYA). Residues 65–85 (GLNEEKNAARQTDDEQKRSDE) show a composition bias toward basic and acidic residues. Disordered stretches follow at residues 65–87 (GLNEEKNAARQTDDEQKRSDEIN) and 279–299 (STATPAAPPPPQLGTATPAAV).

The protein belongs to the Poa p IX/Phl p VI allergen family.

This is Major pollen allergen Pha a 5.2 from Phalaris aquatica (Canary grass).